A 785-amino-acid chain; its full sequence is Conserved oligomeric Golgi complex subunit 4 (785 aa).

The disordered stretch occupies residues 1–24 (MADLDSPPKLSGVQQPSEGVGGGR). Position 2 is an N-acetylalanine (Ala-2). Residues 2–84 (ADLDSPPKLS…VTLHRMGPNL (83 aa)) are interaction with SCFD1. Ser-6 is modified (phosphoserine). Positions 85–153 (QLIEGDAKQL…TALRSEDYEQ (69 aa)) are interaction with STX5. A d domain region spans residues 618–740 (PQVQPWINSF…SQMATILNLE (123 aa)). Residues 741-785 (RVTEILDYWGPNSGPLTWRLTPAEVRQVLALRIDFRSEDIKRLRL) are e domain; essential for proper cell surface glycosylation.

Belongs to the COG4 family. As to quaternary structure, monomer. Component of the conserved oligomeric Golgi (COG) complex which is composed of eight different subunits and is required for normal Golgi morphology and localization. Mediates interaction of SCFD1 with the COG complex. Interacts with STX5.

It localises to the cytoplasm. The protein localises to the cytosol. The protein resides in the golgi apparatus membrane. Functionally, required for normal Golgi function. Plays a role in SNARE-pin assembly and Golgi-to-ER retrograde transport via its interaction with SCFD1. This chain is Conserved oligomeric Golgi complex subunit 4 (COG4), found in Homo sapiens (Human).